A 146-amino-acid chain; its full sequence is Large ribosomal subunit protein uL15 (146 aa).

The interval M1–G54 is disordered. The span at R23–V37 shows a compositional bias: gly residues.

The protein belongs to the universal ribosomal protein uL15 family. In terms of assembly, part of the 50S ribosomal subunit.

In terms of biological role, binds to the 23S rRNA. The protein is Large ribosomal subunit protein uL15 of Acinetobacter baylyi (strain ATCC 33305 / BD413 / ADP1).